Consider the following 638-residue polypeptide: Chaperone protein DnaK (638 aa).

T198 carries the post-translational modification Phosphothreonine; by autocatalysis. Positions 600–638 are disordered; it reads KTQTEGGAQPGAEADGDTGAKGGEKVVDADFEEVKDDKK. Positions 628-638 are enriched in acidic residues; that stretch reads ADFEEVKDDKK.

Belongs to the heat shock protein 70 family.

In terms of biological role, acts as a chaperone. This Geobacter metallireducens (strain ATCC 53774 / DSM 7210 / GS-15) protein is Chaperone protein DnaK.